Consider the following 168-residue polypeptide: Large ribosomal subunit protein bL9 (168 aa).

The tract at residues 148–168 is disordered; it reads ENGEGSVQPAAEAAEVASTEA. A compositionally biased stretch (low complexity) spans 157–168; sequence AAEAAEVASTEA.

The protein belongs to the bacterial ribosomal protein bL9 family.

Functionally, binds to the 23S rRNA. The sequence is that of Large ribosomal subunit protein bL9 from Herpetosiphon aurantiacus (strain ATCC 23779 / DSM 785 / 114-95).